The chain runs to 601 residues: MTTTPISNVRNFSIVAHIDHGKSTLADRLIQTTGGLQDREMKEQVLDSMDIERERGITIKAQTVRLRYKAKDGKDYILNLMDTPGHVDFAYEVSRCLAACEGALLVVDASQGVEAQTLANVYQAIDNNLEIVPVLNKVDLPAAEPDQVKQQIEDVIGIDASEAIMVSAKTGIGIPDVLEAIVTRLPPPKGDRDATLKALLVDSWYDVYLGVVVLVRVVDGVLKKGDRIRMMGTNAAYDVERVGVFTPKMVNVDELGPGEVGFITAAIKEVADTRVGDTITDDRKPITEMLPGFKPAIPVVFCGLFPVDADDFETLRGAMGKLRLNDASFSFEMETSAALGFGFRCGFLGLLHLEIIQERLSREFNLNLIATAPSVIYKMHLTDGQEIEIHNPIDMPDVVKIAEIEEPWIEATIMTPDDYLGAVLKLCQERRGTQKELTYVGSRAMAKYELPLNEVVFDFYDRLKSVSKGYASFDYHLTDYKAADLVKMQILVNNEPVDALSMLVHRSRAEGRGRAMVEKMKELIPPHMFQIPIQAAIGGKVIARETVRALRKDVTAKCYGGDITRKRKLLEKQKEGKKKMRQFGKVDIPQEAFIAALKVDS.

Residues 7-189 (SNVRNFSIVA…AIVTRLPPPK (183 aa)) enclose the tr-type G domain. GTP-binding positions include 19-24 (DHGKST) and 136-139 (NKVD).

It belongs to the TRAFAC class translation factor GTPase superfamily. Classic translation factor GTPase family. LepA subfamily.

The protein resides in the cell inner membrane. The enzyme catalyses GTP + H2O = GDP + phosphate + H(+). In terms of biological role, required for accurate and efficient protein synthesis under certain stress conditions. May act as a fidelity factor of the translation reaction, by catalyzing a one-codon backward translocation of tRNAs on improperly translocated ribosomes. Back-translocation proceeds from a post-translocation (POST) complex to a pre-translocation (PRE) complex, thus giving elongation factor G a second chance to translocate the tRNAs correctly. Binds to ribosomes in a GTP-dependent manner. The polypeptide is Elongation factor 4 (Afipia carboxidovorans (strain ATCC 49405 / DSM 1227 / KCTC 32145 / OM5) (Oligotropha carboxidovorans)).